The primary structure comprises 550 residues: U-box domain-containing protein 40 (550 aa).

Positions 19-29 are enriched in basic and acidic residues; the sequence is KSDNLSRRESL. Residues 19–55 are disordered; sequence KSDNLSRRESLAGKSKWRTSLSRSSSSSSSNNNSPTK. Positions 38 to 52 are enriched in low complexity; it reads SLSRSSSSSSSNNNS. The region spanning 57-127 is the U-box domain; sequence EIPAEFLCPI…HSWCERRCFP (71 aa). ARM repeat units lie at residues 260 to 299, 301 to 340, 342 to 381, 383 to 420, and 422 to 464; these read ESSR…NLSL, KSNK…SLAL, DENK…HLSL, QSNR…NMAS, and PVSR…GLSH.

The catalysed reaction is S-ubiquitinyl-[E2 ubiquitin-conjugating enzyme]-L-cysteine + [acceptor protein]-L-lysine = [E2 ubiquitin-conjugating enzyme]-L-cysteine + N(6)-ubiquitinyl-[acceptor protein]-L-lysine.. It functions in the pathway protein modification; protein ubiquitination. Its function is as follows. Functions as an E3 ubiquitin ligase. This chain is U-box domain-containing protein 40 (PUB40), found in Arabidopsis thaliana (Mouse-ear cress).